A 584-amino-acid polypeptide reads, in one-letter code: Protein phosphatase 2A scaffold subunit (584 aa).

HEAT repeat units follow at residues 7 to 45 (ESDD…ALGP), 46 to 84 (ERTR…FVGG), 86 to 123 (EHAV…EIPT), 168 to 206 (LRKT…VKSE), 207 to 239 (ILPL…MLTN), 240 to 278 (EENI…SMGT), 279 to 317 (EITK…LLTK), 318 to 356 (EMNI…IYGK), 358 to 395 (DTLT…VIGI), 397 to 434 (MLSQ…QLGV), 441 to 479 (LGNL…AKNN), 480 to 512 (IIPK…VVGG), 513 to 551 (DVIS…LLDS), and 553 to 584 (IVQS…LQLC).

It belongs to the phosphatase 2A regulatory subunit A family. As to quaternary structure, component of the Sca1 complex composed of at least gefA, gefH, scaA, phr, and the protein phosphatase 2A subunits pppA and pho2B.

Its subcellular location is the cytoplasm. It localises to the cytosol. It is found in the cell membrane. Scaffolding molecule which may coordinate the assembly of the catalytic subunit and a variable regulatory B subunit. Component of the Sca1 complex, a regulator of cell motility, chemotaxis and signal relay. The Sca1 complex is recruited to the plasma membrane in a chemoattractant- and F-actin-dependent manner and is enriched at the leading edge of chemotaxing cells where it regulates F-actin dynamics and signal relay by controlling the activation of rasC and the downstream target of rapamycin complex 2 (TORC2)-Akt/protein kinase B (PKB) pathway. This is Protein phosphatase 2A scaffold subunit (pppA) from Dictyostelium discoideum (Social amoeba).